Here is a 418-residue protein sequence, read N- to C-terminus: Probable carboxypeptidase AO090166000075 (418 aa).

A signal peptide spans 1–18 (MKATDLFHVTALVAGALA). N-linked (GlcNAc...) asparagine glycosylation occurs at Asn-74. Zn(2+) is bound at residue Asp-147. An N-linked (GlcNAc...) asparagine glycan is attached at Asn-168. The active-site Proton acceptor is Glu-179. Residue Glu-180 coordinates Zn(2+).

It belongs to the peptidase M20A family. Requires Zn(2+) as cofactor.

It localises to the secreted. The polypeptide is Probable carboxypeptidase AO090166000075 (Aspergillus oryzae (strain ATCC 42149 / RIB 40) (Yellow koji mold)).